Reading from the N-terminus, the 306-residue chain is MATKNEEILRKPDWLKIKLNTNENYIGLKKMMREKNLHTVCEEAKCPNIHECWGARRTATFMILGAVCTRACRFCAVKTGLPNELDLNEPERVAESVELMNLKHVVITAVARDDLRDAGSNVYAETVRKVRERNPFTTIEILPSDMGGDYEALETLMASKPDILNHNIETVRRLTPRVRARATYERTLEFLRRSKELQPDIPTKSSLMVGLGETIEEIYETMDDLRANDVDILTIGQYLQPSRKHLKVEKYYTPLEFGKLRKVAMDKGFKHCEAGPMVRSSYHADEQVNEAAKEKHRLGEEKLQQN.

The [4Fe-4S] cluster site is built by Cys-41, Cys-46, Cys-52, Cys-68, Cys-72, Cys-75, and Ser-281. A Radical SAM core domain is found at 54-270 (GARRTATFMI…RKVAMDKGFK (217 aa)). Residues 283–306 (HADEQVNEAAKEKHRLGEEKLQQN) form a disordered region.

This sequence belongs to the radical SAM superfamily. Lipoyl synthase family. It depends on [4Fe-4S] cluster as a cofactor.

The protein localises to the cytoplasm. It catalyses the reaction [[Fe-S] cluster scaffold protein carrying a second [4Fe-4S](2+) cluster] + N(6)-octanoyl-L-lysyl-[protein] + 2 oxidized [2Fe-2S]-[ferredoxin] + 2 S-adenosyl-L-methionine + 4 H(+) = [[Fe-S] cluster scaffold protein] + N(6)-[(R)-dihydrolipoyl]-L-lysyl-[protein] + 4 Fe(3+) + 2 hydrogen sulfide + 2 5'-deoxyadenosine + 2 L-methionine + 2 reduced [2Fe-2S]-[ferredoxin]. Its pathway is protein modification; protein lipoylation via endogenous pathway; protein N(6)-(lipoyl)lysine from octanoyl-[acyl-carrier-protein]. Its function is as follows. Catalyzes the radical-mediated insertion of two sulfur atoms into the C-6 and C-8 positions of the octanoyl moiety bound to the lipoyl domains of lipoate-dependent enzymes, thereby converting the octanoylated domains into lipoylated derivatives. The protein is Lipoyl synthase of Staphylococcus haemolyticus (strain JCSC1435).